We begin with the raw amino-acid sequence, 1111 residues long: Zinc finger protein GLI1 (1111 aa).

Positions 52-78 (GYGAARETSSCTEGSLFPPPPPPRSSV) are disordered. Positions 123–127 (SYGHL) are interaction with SUFU. C2H2-type zinc fingers lie at residues 238–263 (TDCRWDGCSQEFDSQEQLVHHINSEH), 271–298 (FVCHWGGCSRELRPFKAQYMLVVHMRRH), 304–328 (HKCTFEGCRKSYSRLENLKTHLRSH), 334–359 (YMCEQEGCSKAFSNASDRAKHQNRTH), and 365–390 (YVCKLPGCTKRYTDPSSLRKHVKTVH). The segment at 286–294 (KAQYMLVVH) is interaction with DNA. Interaction with DNA stretches follow at residues 348-353 (ASDRAK) and 378-384 (DPSSLRK). The tract at residues 378–487 (DPSSLRKHVK…EDLSSLDEGP (110 aa)) is disordered. Residues 416 to 431 (EPKREREGGSGREESR) show a composition bias toward basic and acidic residues. Polar residues predominate over residues 439-465 (MPQQSPGAQSSCSSDHSPAGSAANTDS). K520 is modified (N6-acetyllysine). 4 disordered regions span residues 528–583 (GAPV…LPGL), 598–649 (ARGS…RAAD), 673–692 (TGRNFDPHHPTSVYSPQPPS), and 832–891 (PCLN…SSHS). The segment covering 546–562 (SSSSSMSSAYTVSRRSS) has biased composition (low complexity). Over residues 640-649 (RASDPARAAD) the composition is skewed to basic and acidic residues. Positions 855-870 (LPQPQYPQSGPYPQPP) are enriched in pro residues. A Glycyl lysine isopeptide (Lys-Gly) (interchain with G-Cter in SUMO2) cross-link involves residue K1008. Residues 1064–1093 (LSPPLSHEQGDSSKNTPSPSGPPNMAVGNM) are disordered.

This sequence belongs to the GLI C2H2-type zinc-finger protein family. As to quaternary structure, interacts with KIF7. Interacts with STK36. Interacts with ZIC1; the interaction enhances transcription activation. Interacts with SUFU; this inhibits transcriptional activation by GLI1. Phosphorylated in vitro by ULK3. In terms of processing, acetylation at Lys-520 down-regulates transcriptional activity. Deacetylated by HDAC1. Post-translationally, ubiquitinated by the CRL2(FEM1B) complex, suppressing GLI1 transcriptional activator activity.

The protein resides in the cytoplasm. It localises to the nucleus. In terms of biological role, acts as a transcriptional activator. Binds to the DNA consensus sequence 5'-GACCACCCA-3'. Regulates the transcription of specific genes during normal development. Plays a role in craniofacial development and digital development, as well as development of the central nervous system and gastrointestinal tract. Mediates SHH signaling. Plays a role in cell proliferation and differentiation via its role in SHH signaling. The sequence is that of Zinc finger protein GLI1 (Gli1) from Mus musculus (Mouse).